We begin with the raw amino-acid sequence, 443 residues long: Aspartate--tRNA(Asp/Asn) ligase (443 aa).

Glutamate 175 is a binding site for L-aspartate. An aspartate region spans residues 197-200 (QLFK). L-aspartate is bound at residue arginine 219. ATP contacts are provided by residues 219–221 (RAE), 227–229 (RHL), and glutamate 366. The Mg(2+) site is built by glutamate 366 and serine 369. Residues serine 369 and arginine 373 each contribute to the L-aspartate site. Residue 414-417 (GCER) participates in ATP binding.

The protein belongs to the class-II aminoacyl-tRNA synthetase family. Type 2 subfamily. In terms of assembly, homodimer. Mg(2+) is required as a cofactor.

Its subcellular location is the cytoplasm. The enzyme catalyses tRNA(Asx) + L-aspartate + ATP = L-aspartyl-tRNA(Asx) + AMP + diphosphate. In terms of biological role, aspartyl-tRNA synthetase with relaxed tRNA specificity since it is able to aspartylate not only its cognate tRNA(Asp) but also tRNA(Asn). Reaction proceeds in two steps: L-aspartate is first activated by ATP to form Asp-AMP and then transferred to the acceptor end of tRNA(Asp/Asn). In Methanococcoides burtonii (strain DSM 6242 / NBRC 107633 / OCM 468 / ACE-M), this protein is Aspartate--tRNA(Asp/Asn) ligase.